We begin with the raw amino-acid sequence, 40 residues long: Photosystem I reaction center subunit IX (40 aa).

Residues 12–34 (APVLLTAWMSLTAGMIIEIQRFF) form a helical membrane-spanning segment.

This sequence belongs to the PsaJ family.

The protein resides in the plastid. The protein localises to the chloroplast thylakoid membrane. In terms of biological role, may help in the organization of the PsaE and PsaF subunits. This chain is Photosystem I reaction center subunit IX, found in Emiliania huxleyi (Coccolithophore).